A 262-amino-acid polypeptide reads, in one-letter code: Global transcriptional regulator CodY (262 aa).

The interval 1–159 is GAF domain; it reads MATLLEKTRK…ATTVIGVQLS (159 aa). The H-T-H motif DNA-binding region spans 207-226; it reads ASVIADKIGITRSVIVNALR.

Belongs to the CodY family.

The protein resides in the cytoplasm. Its function is as follows. DNA-binding global transcriptional regulator which is involved in the adaptive response to starvation and acts by directly or indirectly controlling the expression of numerous genes in response to nutrient availability. During rapid exponential growth, CodY is highly active and represses genes whose products allow adaptation to nutrient depletion. This chain is Global transcriptional regulator CodY, found in Lactococcus lactis subsp. cremoris (strain SK11).